A 470-amino-acid chain; its full sequence is MTLSSGEPSAVGGRHRVVIIGSGFGGLNAAKALKRADVDITLISKTTTHLFQPLLYQVATGILSEGDIAPTTRLILRRQKNVRVLLGEVNAIDLKAQTVTSKLMDMTTVTPYDSLIVAAGAQQSYFGNDEFATFAPGMKTIDDALELRGRILGAFEAAEVSTDHAERERRLTFVVVGAGPTGVEVAGQIVELAERTLAGAFRTITPSECRVILLDAAPAVLPPMGPKLGLKAQRRLEKMDVEVQLNAMVTAVDYKGITIKEKDGGERRIECACKVWAAGVAASPLGKMIAEGSDGTEIDRAGRVIVEPDLTVKGHPNVFVVGDLMFVPGVPGVAQGAIQGARYATTVIKHMVKGNDDPANRKPFHYFNKGSMATISRHSAVAQVGKLEFAGYFAWLAWLVLHLVYLVGYRNRIAALFAWGISFMGRARGQMAITSQMIYARLVMTLMEQQAQGALAAAEQAEHAEQEAAG.

FAD-binding positions include 21–25 (GSGFG) and Val-89. Residue Glu-184 is part of the active site. Residues Asp-323 and 334–335 (AQ) contribute to the FAD site. The helical transmembrane segment at 389 to 409 (FAGYFAWLAWLVLHLVYLVGY) threads the bilayer.

This sequence belongs to the NADH dehydrogenase family. FAD is required as a cofactor.

It is found in the cell inner membrane. The catalysed reaction is a quinone + NADH + H(+) = a quinol + NAD(+). It catalyses the reaction a menaquinone + NADH + H(+) = a menaquinol + NAD(+). Its activity is regulated as follows. Inhibited by phenothiazine analogs. Its function is as follows. Alternative, nonproton pumping NADH:quinone oxidoreductase that delivers electrons to the respiratory chain by oxidation of NADH and reduction of quinones. This Mycobacterium tuberculosis (strain ATCC 25618 / H37Rv) protein is Type II NADH:quinone oxidoreductase NdhA.